A 423-amino-acid polypeptide reads, in one-letter code: Serine--tRNA ligase (423 aa).

230 to 232 (TAE) is a binding site for L-serine. 261 to 263 (RAE) provides a ligand contact to ATP. Glutamate 284 lines the L-serine pocket. ATP is bound at residue 348–351 (EISS). Residue serine 384 coordinates L-serine.

Belongs to the class-II aminoacyl-tRNA synthetase family. Type-1 seryl-tRNA synthetase subfamily. As to quaternary structure, homodimer. The tRNA molecule binds across the dimer.

It is found in the cytoplasm. The enzyme catalyses tRNA(Ser) + L-serine + ATP = L-seryl-tRNA(Ser) + AMP + diphosphate + H(+). It carries out the reaction tRNA(Sec) + L-serine + ATP = L-seryl-tRNA(Sec) + AMP + diphosphate + H(+). The protein operates within aminoacyl-tRNA biosynthesis; selenocysteinyl-tRNA(Sec) biosynthesis; L-seryl-tRNA(Sec) from L-serine and tRNA(Sec): step 1/1. In terms of biological role, catalyzes the attachment of serine to tRNA(Ser). Is also able to aminoacylate tRNA(Sec) with serine, to form the misacylated tRNA L-seryl-tRNA(Sec), which will be further converted into selenocysteinyl-tRNA(Sec). This is Serine--tRNA ligase from Acetivibrio thermocellus (strain ATCC 27405 / DSM 1237 / JCM 9322 / NBRC 103400 / NCIMB 10682 / NRRL B-4536 / VPI 7372) (Clostridium thermocellum).